A 494-amino-acid chain; its full sequence is UPF0371 protein SPH_0451 (494 aa).

This sequence belongs to the UPF0371 family.

The polypeptide is UPF0371 protein SPH_0451 (Streptococcus pneumoniae (strain Hungary19A-6)).